The chain runs to 82 residues: MKASYNIQDHFLNQLRKEMVPTTVFLVSGFQIRGVIKSFDNFTVIVESEGRQQLIYKHAISTFSPARNVTLYEPDAVEVTEG.

Positions 9 to 69 (DHFLNQLRKE…ISTFSPARNV (61 aa)) constitute a Sm domain.

It belongs to the Hfq family. As to quaternary structure, homohexamer.

RNA chaperone that binds small regulatory RNA (sRNAs) and mRNAs to facilitate mRNA translational regulation in response to envelope stress, environmental stress and changes in metabolite concentrations. Also binds with high specificity to tRNAs. In Exiguobacterium sp. (strain ATCC BAA-1283 / AT1b), this protein is RNA-binding protein Hfq.